Here is a 257-residue protein sequence, read N- to C-terminus: Phosphate import ATP-binding protein PstB (257 aa).

An ABC transporter domain is found at 4–252; it reads LKLNDVNIYY…PDNKETEDYI (249 aa). Residue 36-43 coordinates ATP; that stretch reads GPSGCGKS.

This sequence belongs to the ABC transporter superfamily. Phosphate importer (TC 3.A.1.7) family. As to quaternary structure, the complex is composed of two ATP-binding proteins (PstB), two transmembrane proteins (PstC and PstA) and a solute-binding protein (PstS).

It is found in the cell membrane. The enzyme catalyses phosphate(out) + ATP + H2O = ADP + 2 phosphate(in) + H(+). Part of the ABC transporter complex PstSACB involved in phosphate import. Responsible for energy coupling to the transport system. This Corynebacterium efficiens (strain DSM 44549 / YS-314 / AJ 12310 / JCM 11189 / NBRC 100395) protein is Phosphate import ATP-binding protein PstB.